The sequence spans 469 residues: 3-isopropylmalate dehydratase large subunit (469 aa).

[4Fe-4S] cluster contacts are provided by Cys347, Cys410, and Cys413.

The protein belongs to the aconitase/IPM isomerase family. LeuC type 1 subfamily. In terms of assembly, heterodimer of LeuC and LeuD. [4Fe-4S] cluster serves as cofactor.

The enzyme catalyses (2R,3S)-3-isopropylmalate = (2S)-2-isopropylmalate. It functions in the pathway amino-acid biosynthesis; L-leucine biosynthesis; L-leucine from 3-methyl-2-oxobutanoate: step 2/4. In terms of biological role, catalyzes the isomerization between 2-isopropylmalate and 3-isopropylmalate, via the formation of 2-isopropylmaleate. This Burkholderia orbicola (strain MC0-3) protein is 3-isopropylmalate dehydratase large subunit.